Reading from the N-terminus, the 167-residue chain is U-scoloptoxin(08)-Er5a (167 aa).

An N-terminal signal peptide occupies residues 1–22; it reads MKTNCEFPLLCLLIVLVANVEG. Residues 23–94 constitute a propeptide that is removed on maturation; the sequence is EVEDTGLKMV…KRLWRNWERR (72 aa). RLWRNWE repeat units lie at residues 34-40, 61-67, and 86-92; these read RLWRNWE. Gln95 is modified (pyrrolidone carboxylic acid). One copy of the RLWRNWE 4; approximate repeat lies at 107-113; sequence ELWRNWE. A propeptide spanning residues 112-118 is cleaved from the precursor; the sequence is WEDLKRR. Residue Gln119 is modified to Pyrrolidone carboxylic acid. Residues 134 to 140 form an RLWRNWE 5 repeat; sequence RLWRNWE. The propeptide occupies 139-167; sequence WEDNHATLRKRSADSLSRQKRLGKERGKE. A disordered region spans residues 147-167; that stretch reads RKRSADSLSRQKRLGKERGKE.

Belongs to the scoloptoxin-08 family. As to expression, expressed by the venom gland.

It localises to the secreted. This is U-scoloptoxin(08)-Er5a from Ethmostigmus rubripes (Giant centipede).